Reading from the N-terminus, the 321-residue chain is UDP-N-acetylenolpyruvoylglucosamine reductase (321 aa).

Residues 39-205 (RTGGLAELFY…TAALLEGEPG (167 aa)) form the FAD-binding PCMH-type domain. The active site involves Arg185. Residue Ser234 is the Proton donor of the active site. Glu304 is an active-site residue.

It belongs to the MurB family. It depends on FAD as a cofactor.

It is found in the cytoplasm. It catalyses the reaction UDP-N-acetyl-alpha-D-muramate + NADP(+) = UDP-N-acetyl-3-O-(1-carboxyvinyl)-alpha-D-glucosamine + NADPH + H(+). Its pathway is cell wall biogenesis; peptidoglycan biosynthesis. In terms of biological role, cell wall formation. The polypeptide is UDP-N-acetylenolpyruvoylglucosamine reductase (Bartonella quintana (strain Toulouse) (Rochalimaea quintana)).